The sequence spans 404 residues: Zinc metalloprotease Rip1 (404 aa).

Residues 1–21 (MMFVTGIVLFALAILISVALH) form a helical membrane-spanning segment. H21 is a Zn(2+) binding site. E22 is a catalytic residue. H25 provides a ligand contact to Zn(2+). The helical transmembrane segment at 104-124 (PGMNLAICLVLIYAIALVWGL) threads the bilayer. One can recognise a PDZ domain in the interval 121–203 (VWGLPNLHPP…SVPIVVERDG (83 aa)). D202 contributes to the Zn(2+) binding site. Helical transmembrane passes span 313–333 (LWVAFWFFLAQLNLILATINL) and 373–393 (LLPATYVVLVLVVGYMLLTVT).

This sequence belongs to the peptidase M50B family. Zn(2+) serves as cofactor.

The protein resides in the cell membrane. Functionally, a probable intramembrane site-2 protease (S2P) that cleaves type-2 transmembrane proteins within their membrane-spanning domains. Cleaves PbpB (PBP3, FtsI); cleavage is inhibited by Wag31-PbpB interaction. Probably also cleaves anti-sigma factors RskA, RslA and RsmA. Its function is as follows. Regulated intramembrane proteolysis (RIP) occurs when an extracytoplasmic signal (possibly oxidative stress) triggers a concerted proteolytic cascade to transmit information and elicit cellular responses. The membrane-spanning regulatory substrate protein (includes anti-sigma factors RskA, RslA, RsmA, and PbpB in M.tuberculosis) is first cut extracytoplasmically (site-1 protease, S1P), then within the membrane itself (site-2 protease, S2P, this entry), while cytoplasmic proteases finish degrading the regulatory protein, liberating the effector protein (ECF sigma factors SigK, SigL and SigM). The sequence is that of Zinc metalloprotease Rip1 (rip1) from Mycobacterium bovis (strain BCG / Pasteur 1173P2).